Here is a 2671-residue protein sequence, read N- to C-terminus: Stalled ribosome sensor GCN1 (2671 aa).

A2 carries the post-translational modification N-acetylalanine. 10 HEAT repeats span residues 140–178, 257–293, 294–331, 385–423, 425–459, 460–503, 560–597, 599–636, 697–732, and 733–770; these read NKLV…ENPG, EFKD…LDLS, QYAM…QCSD, IVAE…EVPK, LTEW…GDTL, LQAL…SVAD, NKVQ…SLGG, KLAH…AGKA, DPEA…SLSV, and LSPD…QTPA. At S729 the chain carries Phosphoserine. S786 is modified (phosphoserine). Residues 804–863 adopt a coiled-coil conformation; sequence QIIELELKEEIKKKKGIKEEVQLTSKQKEMLQAQLDREAQVRRRLQELDGELEAALGLLD. 36 HEAT repeats span residues 879–925, 979–1016, 1035–1072, 1078–1115, 1155–1192, 1210–1250, 1251–1289, 1290–1332, 1335–1372, 1374–1410, 1413–1451, 1455–1492, 1493–1530, 1534–1571, 1573–1609, 1611–1648, 1653–1690, 1692–1729, 1731–1769, 1773–1810, 1812–1848, 1921–1958, 1959–1996, 2001–2038, 2039–2076, 2078–2106, 2107–2146, 2147–2184, 2188–2225, 2259–2296, 2301–2338, 2339–2380, 2382–2417, 2422–2459, 2546–2583, and 2588–2625; these read VLVD…HVTL, SLVF…QAQL, LPRV…SSSG, FAEQ…VLPA, DLQP…RYQR, YRPP…YLDS, SQVK…THGK, ENVN…HLDK, PKVK…AIKE, AGGM…GLGI, LKQQ…MLGK, PYVV…NLSA, HGVK…CAPK, SCLP…VIRN, EILA…HFID, PSLA…LTDQ, PYLP…GMGE, CFED…GLGV, KLEK…TFGD, PYVG…MYAE, AIAL…HISG, EILP…KLGE, KILP…STSR, YFSE…TIGH, QALE…SRVV, PYLV…DALT, RHLG…VEDD, TGHR…RSKA, SHLR…KLDA, KGVT…LTSA, PSVV…AKVG, IALK…IHIK, DPLF…GAGA, VIRK…FLTE, QLPA…DPLP, and QAIK…MRQG. Residues 2260–2408 form an RWDBD region region; that stretch reads GVTSILPVLR…GVRDTMLQAL (149 aa). Position 2276 is a phosphoserine (S2276). The stretch at 2627 to 2661 is one HEAT 47; degenerate repeat; the sequence is EVFQSLSKILDVASLEVLNEVNRRSLKKLASQADS.

It belongs to the GCN1 family. Interacts with EIF2AK4/GCN2; this interaction stimulates the EIF2AK4/GCN2 kinase activity and is impaired by IMPACT upon a variety of stress conditions, such as amino acid depletion, UV-C irradiation, proteasome inhibitor treatment and glucose deprivation. Interacts with IMPACT; this prevents the interaction of GCN1 with EIF2AK4/GCN2 and inhibits EIF2AK4/GCN2 kinase activity. Interacts with RNF14; interaction takes place following ribosome stalling and promotes recruitment of RNF14. As to expression, ubiquitously expressed. Expressed in skeletal muscules, ovary and testis.

The protein localises to the cytoplasm. Its function is as follows. Ribosome collision sensor that plays a key role in the RNF14-RNF25 translation quality control pathway, a pathway that takes place when a ribosome has stalled during translation, and which promotes ubiquitination and degradation of translation factors on stalled ribosomes. Directly binds to the ribosome and acts as a sentinel for colliding ribosomes: activated following ribosome stalling and promotes recruitment of RNF14, which directly ubiquitinates EEF1A1/eEF1A, leading to its degradation. In addition to EEF1A1/eEF1A, the RNF14-RNF25 translation quality control pathway mediates degradation of ETF1/eRF1 and ubiquitination of ribosomal protein. GCN1 also acts as a positive activator of the integrated stress response (ISR) by mediating activation of EIF2AK4/GCN2 in response to amino acid starvation. Interaction with EIF2AK4/GCN2 on translating ribosomes stimulates EIF2AK4/GCN2 kinase activity, leading to phosphorylation of eukaryotic translation initiation factor 2 (eIF-2-alpha/EIF2S1). EIF2S1/eIF-2-alpha phosphorylation converts EIF2S1/eIF-2-alpha into a global protein synthesis inhibitor, leading to a global attenuation of cap-dependent translation, and thus to a reduced overall utilization of amino acids, while concomitantly initiating the preferential translation of ISR-specific mRNAs, such as the transcriptional activator ATF4, and hence allowing ATF4-mediated reprogramming of amino acid biosynthetic gene expression to alleviate nutrient depletion. The chain is Stalled ribosome sensor GCN1 from Homo sapiens (Human).